We begin with the raw amino-acid sequence, 140 residues long: Ergosterol biosynthetic protein 28 homolog (140 aa).

4 consecutive transmembrane segments (helical) span residues 4–24 (FLNV…GNTL), 52–72 (TFGI…IDIH), 79–99 (ITLW…FVFG), and 105–125 (VGVL…LVGL).

The protein belongs to the ERG28 family.

The protein resides in the endoplasmic reticulum membrane. The chain is Ergosterol biosynthetic protein 28 homolog from Mus musculus (Mouse).